Consider the following 633-residue polypeptide: ATP-dependent clpX-like chaperone, mitochondrial (633 aa).

A mitochondrion-targeting transit peptide spans 1-56; the sequence is MPSCGACTCGAAAVRLITSSLASAQRGISGGRIHMSVLGRLGTFETQILQRAPLRS. The interval 68-100 is disordered; sequence DGISKDGSGDGNKKSASEGSSKKSGSGNSGKGG. The segment covering 69-83 has biased composition (basic and acidic residues); sequence GISKDGSGDGNKKSA. Residues 84–93 show a composition bias toward low complexity; sequence SEGSSKKSGS. A ClpX-type ZB domain is found at 93–146; that stretch reads SGNSGKGGNQLRCPKCGDLCTHVETFVSSTRFVKCEKCHHFFVVLSEADSKKSI. Residues cysteine 105, cysteine 108, cysteine 127, and cysteine 130 each coordinate Zn(2+). Residue 294–301 participates in ATP binding; sequence PTGSGKTL. An N6-acetyllysine modification is found at lysine 437. The span at 598–610 shows a compositional bias: basic and acidic residues; the sequence is KEPGYIRAPTKES. The interval 598-633 is disordered; sequence KEPGYIRAPTKESSEEEYDSGVEEEGWPRQADAANS. The span at 611–622 shows a compositional bias: acidic residues; the sequence is SEEEYDSGVEEE. Serine 617 is modified (phosphoserine).

The protein belongs to the ClpX chaperone family. In terms of assembly, homohexamer that forms a ring structure; this hexamerization requires ATP binding. Component of the ClpXP complex formed by the assembly of two CLPP heptameric rings with two CLPX hexameric rings, giving rise to a symmetrical structure with two central CLPP rings flanked by a CLPX ring at either end of the complex. Interacts with TFAM. As to expression, higher expression in skeletal muscle and heart and to a lesser extent in liver, brain, placenta, lung, kidney and pancreas.

It is found in the mitochondrion. The protein localises to the mitochondrion matrix. It localises to the mitochondrion nucleoid. The catalysed reaction is ATP + H2O = ADP + phosphate + H(+). ATP-dependent chaperone that functions as an unfoldase. As part of the ClpXP protease complex, it recognizes specific protein substrates, unfolds them using energy derived from ATP hydrolysis, and then translocates them to the proteolytic subunit (CLPP) of the ClpXP complex for degradation. Thanks to its chaperone activity, it also functions in the incorporation of the pyridoxal phosphate cofactor into 5-aminolevulinate synthase, thereby activating 5-aminolevulinate (ALA) synthesis, the first step in heme biosynthesis. This chaperone is also involved in the control of mtDNA nucleoid distribution, by regulating mitochondrial transcription factor A (TFAM) activity. The protein is ATP-dependent clpX-like chaperone, mitochondrial of Homo sapiens (Human).